Here is a 540-residue protein sequence, read N- to C-terminus: Pentatricopeptide repeat-containing protein At1g14470 (540 aa).

PPR repeat units lie at residues 70–104 (NVFV…GIMP), 105–134 (DAFS…GFFK), 135–165 (DPYV…ISQR), 166–196 (KGSD…MPEN), 197–227 (DVVS…MPEK), 228–262 (SVVS…GVRP), 263–297 (NETT…RVRL), 298–328 (NCFV…LGTQ), 330–364 (NLVT…NVVS), 365–395 (WNSL…GDSK), 397–431 (DEVT…QIKL), 432–462 (NDSG…MKER), 463–497 (DVVS…GIEP), and 498–528 (DRVT…IRNP).

It belongs to the PPR family. PCMP-A subfamily.

This is Pentatricopeptide repeat-containing protein At1g14470 (PCMP-A4) from Arabidopsis thaliana (Mouse-ear cress).